The sequence spans 56 residues: UPF0434 protein WIGBR2520 (56 aa).

The protein belongs to the UPF0434 family.

In Wigglesworthia glossinidia brevipalpis, this protein is UPF0434 protein WIGBR2520.